A 130-amino-acid chain; its full sequence is Large ribosomal subunit protein bL19 (130 aa).

Belongs to the bacterial ribosomal protein bL19 family.

Functionally, this protein is located at the 30S-50S ribosomal subunit interface and may play a role in the structure and function of the aminoacyl-tRNA binding site. This chain is Large ribosomal subunit protein bL19, found in Mycoplasma capricolum subsp. capricolum (strain California kid / ATCC 27343 / NCTC 10154).